The following is a 312-amino-acid chain: ADIPOR-like receptor IZH4 (312 aa).

A disordered region spans residues 1 to 38 (MVSLTTIEQSPVKCETTTEKESNDTRGTDSNENAETKE). Topologically, residues 1-64 (MVSLTTIEQS…YKNKSSRNES (64 aa)) are cytoplasmic. Basic and acidic residues predominate over residues 16-38 (TTTEKESNDTRGTDSNENAETKE). Residues 65-85 (LVALIYLLGSMLSFCLLIFFT) traverse the membrane as a helical segment. The Lumenal segment spans residues 86-101 (DFYLIPLFPTTTTMTD). Residues 102 to 122 (YIVFNFYLLNVFVFCMVHFIY) traverse the membrane as a helical segment. Residues 123–141 (HFVKNISLQQHLEHWQKFS) lie on the Cytoplasmic side of the membrane. The helical transmembrane segment at 142-162 (YLSNINLLISSQITILYYLFY) threads the bilayer. Over 163–165 (DYV) the chain is Lumenal. A helical transmembrane segment spans residues 166–186 (FFFKIFTLLMNFIGLVAYFFI). Residues 187–201 (LTDKLISSKRFNKTV) lie on the Cytoplasmic side of the membrane. A helical transmembrane segment spans residues 202–222 (FFISVSVVCCSLPLLTAIITF). At 223–231 (DGLENLKER) the chain is on the lumenal side. Residues 232–252 (IKVNAITWELVALVAASIIYV) traverse the membrane as a helical segment. Residues 253-277 (TRFPESLFRRNKKEEGWNHSEYLFH) lie on the Cytoplasmic side of the membrane. The helical transmembrane segment at 278-298 (LLISGTAFYHFFILIQSYILM) threads the bilayer. The Lumenal portion of the chain corresponds to 299-312 (HSSLNQPELINFKS).

The protein belongs to the ADIPOR family.

Its subcellular location is the endoplasmic reticulum membrane. Functionally, ADIPOR-like receptor involved in zinc metabolism either by altering membrane sterol content or by directly altering cellular zinc levels. The chain is ADIPOR-like receptor IZH4 (IZH4) from Saccharomyces cerevisiae (strain ATCC 204508 / S288c) (Baker's yeast).